The following is a 621-amino-acid chain: C4-dicarboxylate transport sensor protein DctB (621 aa).

Residues 1-26 (MHHVRMVKLPAEASDPHALRSRARRS) lie on the Cytoplasmic side of the membrane. A helical membrane pass occupies residues 27-45 (WLVFAAVALVLLAAGLLLA). Topologically, residues 46-320 (RDYGRSQALA…PLAAGAREAQ (275 aa)) are periplasmic. The chain crosses the membrane as a helical span at residues 321-338 (LLTLAALVPLLALAALLL). Residues 339–621 (RRRQVVAMRS…TTFAVNLKKA (283 aa)) are Cytoplasmic-facing. In terms of domain architecture, Histidine kinase spans 412–621 (GVAHEINQPV…TTFAVNLKKA (210 aa)). Phosphohistidine; by autocatalysis is present on histidine 415.

Autophosphorylated.

The protein localises to the cell inner membrane. The enzyme catalyses ATP + protein L-histidine = ADP + protein N-phospho-L-histidine.. Functionally, member of the two-component regulatory system DctB/DctD involved in the transport of C4-dicarboxylates. DctB functions as a membrane-associated protein kinase that phosphorylates DctD in response to environmental signals. In Rhizobium meliloti (strain 1021) (Ensifer meliloti), this protein is C4-dicarboxylate transport sensor protein DctB (dctB).